A 104-amino-acid polypeptide reads, in one-letter code: Replication restart protein PriB (104 aa).

The region spanning 1–101 (MTNRLALSGT…LHAEQIELID (101 aa)) is the SSB domain.

This sequence belongs to the PriB family. As to quaternary structure, homodimer. Interacts with PriA and DnaT. Component of the replication restart primosome. Primosome assembly occurs via a 'hand-off' mechanism. PriA binds to replication forks, subsequently PriB then DnaT bind; DnaT then displaces ssDNA to generate the helicase loading substrate.

In terms of biological role, involved in the restart of stalled replication forks, which reloads the replicative helicase on sites other than the origin of replication; the PriA-PriB pathway is the major replication restart pathway. During primosome assembly it facilitates complex formation between PriA and DnaT on DNA; stabilizes PriA on DNA. Stimulates the DNA unwinding activity of PriA helicase. The chain is Replication restart protein PriB from Citrobacter koseri (strain ATCC BAA-895 / CDC 4225-83 / SGSC4696).